Consider the following 244-residue polypeptide: Serine-rich single-pass membrane protein 1 (244 aa).

The helical transmembrane segment at 35-55 threads the bilayer; that stretch reads CGTIGNFLLWYFVIVFVLMFF. Disordered stretches follow at residues 65–112, 132–191, and 213–244; these read DKKD…LTPV, QSQF…LGSY, and HSQQKASVTPPMKGDSPEESSISDINTKFSKF. The span at 80-94 shows a compositional bias: basic and acidic residues; the sequence is ASKETSYKWQSKDGA. 2 stretches are compositionally biased toward polar residues: residues 97-112 and 132-142; these read PSQTMKKPKQNQLTPV and QSQFNEVNQNQ. Residues 161-176 show a composition bias toward basic and acidic residues; it reads SWKESESEHHPSPDSI. A compositionally biased stretch (polar residues) spans 231 to 244; the sequence is ESSISDINTKFSKF.

The protein resides in the membrane. The chain is Serine-rich single-pass membrane protein 1 (SSMEM1) from Macaca fascicularis (Crab-eating macaque).